Reading from the N-terminus, the 931-residue chain is Isoleucine--tRNA ligase (931 aa).

A 'HIGH' region motif is present at residues 58 to 68 (PYANGHLHCGH). Residue glutamate 559 coordinates L-isoleucyl-5'-AMP. The short motif at 600–604 (KLSKS) is the 'KMSKS' region element. Position 603 (lysine 603) interacts with ATP. The Zn(2+) site is built by cysteine 894, cysteine 897, cysteine 914, and cysteine 917.

The protein belongs to the class-I aminoacyl-tRNA synthetase family. IleS type 1 subfamily. In terms of assembly, monomer. Zn(2+) serves as cofactor.

It localises to the cytoplasm. The enzyme catalyses tRNA(Ile) + L-isoleucine + ATP = L-isoleucyl-tRNA(Ile) + AMP + diphosphate. Functionally, catalyzes the attachment of isoleucine to tRNA(Ile). As IleRS can inadvertently accommodate and process structurally similar amino acids such as valine, to avoid such errors it has two additional distinct tRNA(Ile)-dependent editing activities. One activity is designated as 'pretransfer' editing and involves the hydrolysis of activated Val-AMP. The other activity is designated 'posttransfer' editing and involves deacylation of mischarged Val-tRNA(Ile). The sequence is that of Isoleucine--tRNA ligase from Legionella pneumophila (strain Corby).